The sequence spans 341 residues: Phenylalanine--tRNA ligase alpha subunit (341 aa).

Residue E254 participates in Mg(2+) binding.

Belongs to the class-II aminoacyl-tRNA synthetase family. Phe-tRNA synthetase alpha subunit type 1 subfamily. Tetramer of two alpha and two beta subunits. Requires Mg(2+) as cofactor.

The protein localises to the cytoplasm. The enzyme catalyses tRNA(Phe) + L-phenylalanine + ATP = L-phenylalanyl-tRNA(Phe) + AMP + diphosphate + H(+). The polypeptide is Phenylalanine--tRNA ligase alpha subunit (Chlorobaculum parvum (strain DSM 263 / NCIMB 8327) (Chlorobium vibrioforme subsp. thiosulfatophilum)).